The sequence spans 127 residues: Small ribosomal subunit protein uS11 (127 aa).

The protein belongs to the universal ribosomal protein uS11 family. As to quaternary structure, part of the 30S ribosomal subunit. Interacts with proteins S7 and S18. Binds to IF-3.

Functionally, located on the platform of the 30S subunit, it bridges several disparate RNA helices of the 16S rRNA. Forms part of the Shine-Dalgarno cleft in the 70S ribosome. The chain is Small ribosomal subunit protein uS11 from Streptococcus pyogenes serotype M49 (strain NZ131).